Here is a 241-residue protein sequence, read N- to C-terminus: Octanoyltransferase (241 aa).

Positions 38-227 (AGGPDTLLLL…AVCNALDGAL (190 aa)) constitute a BPL/LPL catalytic domain. Residues 85 to 92 (RGGKITWH), 157 to 159 (AIG), and 170 to 172 (GFA) contribute to the substrate site. The active-site Acyl-thioester intermediate is the cysteine 188.

This sequence belongs to the LipB family.

The protein resides in the cytoplasm. The catalysed reaction is octanoyl-[ACP] + L-lysyl-[protein] = N(6)-octanoyl-L-lysyl-[protein] + holo-[ACP] + H(+). Its pathway is protein modification; protein lipoylation via endogenous pathway; protein N(6)-(lipoyl)lysine from octanoyl-[acyl-carrier-protein]: step 1/2. Functionally, catalyzes the transfer of endogenously produced octanoic acid from octanoyl-acyl-carrier-protein onto the lipoyl domains of lipoate-dependent enzymes. Lipoyl-ACP can also act as a substrate although octanoyl-ACP is likely to be the physiological substrate. This Mycobacterium marinum (strain ATCC BAA-535 / M) protein is Octanoyltransferase.